The chain runs to 259 residues: Zinc import ATP-binding protein ZnuC (259 aa).

Residues 11–225 enclose the ABC transporter domain; it reads IRLENIYVHR…PEYLAIFGGQ (215 aa). Residue 43 to 50 participates in ATP binding; the sequence is GPNGAGKS.

The protein belongs to the ABC transporter superfamily. Zinc importer (TC 3.A.1.15.5) family. As to quaternary structure, the complex is composed of two ATP-binding proteins (ZnuC), two transmembrane proteins (ZnuB) and a solute-binding protein (ZnuA).

Its subcellular location is the cell inner membrane. The enzyme catalyses Zn(2+)(out) + ATP(in) + H2O(in) = Zn(2+)(in) + ADP(in) + phosphate(in) + H(+)(in). Its function is as follows. Part of the ABC transporter complex ZnuABC involved in zinc import. Responsible for energy coupling to the transport system. The polypeptide is Zinc import ATP-binding protein ZnuC (Acinetobacter baylyi (strain ATCC 33305 / BD413 / ADP1)).